The primary structure comprises 526 residues: Peptide chain release factor 3 (526 aa).

In terms of domain architecture, tr-type G spans 11 to 277 (SKRRTFAIIS…SLIKWAPSPL (267 aa)). Residues 20-27 (SHPDAGKT), 88-92 (DTPGH), and 142-145 (NKLD) each bind GTP.

The protein belongs to the TRAFAC class translation factor GTPase superfamily. Classic translation factor GTPase family. PrfC subfamily.

Its subcellular location is the cytoplasm. Increases the formation of ribosomal termination complexes and stimulates activities of RF-1 and RF-2. It binds guanine nucleotides and has strong preference for UGA stop codons. It may interact directly with the ribosome. The stimulation of RF-1 and RF-2 is significantly reduced by GTP and GDP, but not by GMP. This is Peptide chain release factor 3 from Buchnera aphidicola subsp. Acyrthosiphon pisum (strain Tuc7).